Reading from the N-terminus, the 134-residue chain is Probable thionin-2.4 (134 aa).

An N-terminal signal peptide occupies residues 1–24; sequence MEGKTLIVSVLIMSLFMAQNQVDA. 3 disulfide bridges follow: Cys-27-Cys-64, Cys-28-Cys-56, and Cys-40-Cys-50. A propeptide spans 71-134 (acidic domain); it reads DILENTGDAV…KGSMNAVENA (64 aa).

This sequence belongs to the plant thionin (TC 1.C.44) family.

It is found in the secreted. Functionally, thionins are small plant proteins which are toxic to animal cells. They seem to exert their toxic effect at the level of the cell membrane. Their precise function is not known. The protein is Probable thionin-2.4 of Arabidopsis thaliana (Mouse-ear cress).